A 400-amino-acid chain; its full sequence is Acetate kinase (400 aa).

Asn-10 provides a ligand contact to Mg(2+). Lys-17 is a binding site for ATP. Arg-91 contacts substrate. Asp-150 acts as the Proton donor/acceptor in catalysis. Residues 210-214 (HLGNG), 285-287 (DCR), and 333-337 (GIGEN) contribute to the ATP site. A Mg(2+)-binding site is contributed by Glu-387.

Belongs to the acetokinase family. In terms of assembly, homodimer. The cofactor is Mg(2+). Requires Mn(2+) as cofactor.

The protein localises to the cytoplasm. It carries out the reaction acetate + ATP = acetyl phosphate + ADP. It participates in metabolic intermediate biosynthesis; acetyl-CoA biosynthesis; acetyl-CoA from acetate: step 1/2. Its function is as follows. Catalyzes the formation of acetyl phosphate from acetate and ATP. Can also catalyze the reverse reaction. This is Acetate kinase from Erwinia tasmaniensis (strain DSM 17950 / CFBP 7177 / CIP 109463 / NCPPB 4357 / Et1/99).